Reading from the N-terminus, the 247-residue chain is Ubiquinone biosynthesis O-methyltransferase (247 aa).

S-adenosyl-L-methionine-binding residues include Arg-39, Gly-70, Asp-91, and Met-134.

The protein belongs to the methyltransferase superfamily. UbiG/COQ3 family.

The catalysed reaction is a 3-demethylubiquinol + S-adenosyl-L-methionine = a ubiquinol + S-adenosyl-L-homocysteine + H(+). The enzyme catalyses a 3-(all-trans-polyprenyl)benzene-1,2-diol + S-adenosyl-L-methionine = a 2-methoxy-6-(all-trans-polyprenyl)phenol + S-adenosyl-L-homocysteine + H(+). It functions in the pathway cofactor biosynthesis; ubiquinone biosynthesis. O-methyltransferase that catalyzes the 2 O-methylation steps in the ubiquinone biosynthetic pathway. The protein is Ubiquinone biosynthesis O-methyltransferase of Cereibacter sphaeroides (strain KD131 / KCTC 12085) (Rhodobacter sphaeroides).